The primary structure comprises 312 residues: Acetyl-coenzyme A carboxylase carboxyl transferase subunit alpha (312 aa).

The CoA carboxyltransferase C-terminal domain maps to 36–286; the sequence is RLDKEVKSIY…KEYFLDALRT (251 aa).

Belongs to the AccA family. Acetyl-CoA carboxylase is a heterohexamer composed of biotin carboxyl carrier protein (AccB), biotin carboxylase (AccC) and two subunits each of ACCase subunit alpha (AccA) and ACCase subunit beta (AccD).

It is found in the cytoplasm. It carries out the reaction N(6)-carboxybiotinyl-L-lysyl-[protein] + acetyl-CoA = N(6)-biotinyl-L-lysyl-[protein] + malonyl-CoA. It participates in lipid metabolism; malonyl-CoA biosynthesis; malonyl-CoA from acetyl-CoA: step 1/1. Component of the acetyl coenzyme A carboxylase (ACC) complex. First, biotin carboxylase catalyzes the carboxylation of biotin on its carrier protein (BCCP) and then the CO(2) group is transferred by the carboxyltransferase to acetyl-CoA to form malonyl-CoA. The polypeptide is Acetyl-coenzyme A carboxylase carboxyl transferase subunit alpha (Helicobacter pylori (strain Shi470)).